Reading from the N-terminus, the 200-residue chain is Probable fatty acid desaturase MIMI_L630 (200 aa).

2 helical membrane passes run 9 to 29 (FIQI…YHWI) and 79 to 99 (IGPL…FIMI).

It belongs to the fatty acid desaturase CarF family.

It is found in the membrane. The chain is Probable fatty acid desaturase MIMI_L630 from Acanthamoeba polyphaga mimivirus (APMV).